Reading from the N-terminus, the 162-residue chain is RNA pyrophosphohydrolase (162 aa).

Residues 7 to 149 form the Nudix hydrolase domain; sequence KYRPCVGIML…KKEVYKTVIE (143 aa). The Nudix box signature appears at 40–61; sequence GGVDDGEELEQAALRELLEEVG.

It belongs to the Nudix hydrolase family. RppH subfamily. Requires a divalent metal cation as cofactor.

In terms of biological role, accelerates the degradation of transcripts by removing pyrophosphate from the 5'-end of triphosphorylated RNA, leading to a more labile monophosphorylated state that can stimulate subsequent ribonuclease cleavage. In Wolbachia pipientis wMel, this protein is RNA pyrophosphohydrolase.